The chain runs to 445 residues: Phosphoglucosamine mutase (445 aa).

The Phosphoserine intermediate role is filled by Ser102. Positions 102, 241, 243, and 245 each coordinate Mg(2+). Residue Ser102 is modified to Phosphoserine.

The protein belongs to the phosphohexose mutase family. Requires Mg(2+) as cofactor. Post-translationally, activated by phosphorylation.

It carries out the reaction alpha-D-glucosamine 1-phosphate = D-glucosamine 6-phosphate. Its function is as follows. Catalyzes the conversion of glucosamine-6-phosphate to glucosamine-1-phosphate. The protein is Phosphoglucosamine mutase of Shewanella halifaxensis (strain HAW-EB4).